We begin with the raw amino-acid sequence, 405 residues long: Probable tRNA sulfurtransferase (405 aa).

The 106-residue stretch at 60–165 (DKIDQRLKLV…QDAIYISNQL (106 aa)) folds into the THUMP domain. ATP contacts are provided by residues 183–184 (ML), 208–209 (HF), arginine 265, glycine 287, and glutamine 296.

Belongs to the ThiI family.

It is found in the cytoplasm. The catalysed reaction is [ThiI sulfur-carrier protein]-S-sulfanyl-L-cysteine + a uridine in tRNA + 2 reduced [2Fe-2S]-[ferredoxin] + ATP + H(+) = [ThiI sulfur-carrier protein]-L-cysteine + a 4-thiouridine in tRNA + 2 oxidized [2Fe-2S]-[ferredoxin] + AMP + diphosphate. The enzyme catalyses [ThiS sulfur-carrier protein]-C-terminal Gly-Gly-AMP + S-sulfanyl-L-cysteinyl-[cysteine desulfurase] + AH2 = [ThiS sulfur-carrier protein]-C-terminal-Gly-aminoethanethioate + L-cysteinyl-[cysteine desulfurase] + A + AMP + 2 H(+). Its pathway is cofactor biosynthesis; thiamine diphosphate biosynthesis. Catalyzes the ATP-dependent transfer of a sulfur to tRNA to produce 4-thiouridine in position 8 of tRNAs, which functions as a near-UV photosensor. Also catalyzes the transfer of sulfur to the sulfur carrier protein ThiS, forming ThiS-thiocarboxylate. This is a step in the synthesis of thiazole, in the thiamine biosynthesis pathway. The sulfur is donated as persulfide by IscS. This chain is Probable tRNA sulfurtransferase, found in Lactobacillus gasseri (strain ATCC 33323 / DSM 20243 / BCRC 14619 / CIP 102991 / JCM 1131 / KCTC 3163 / NCIMB 11718 / NCTC 13722 / AM63).